The chain runs to 360 residues: UDP-N-acetylglucosamine--N-acetylmuramyl-(pentapeptide) pyrophosphoryl-undecaprenol N-acetylglucosamine transferase (360 aa).

UDP-N-acetyl-alpha-D-glucosamine is bound by residues Thr-15 to Gly-17, Asn-128, Arg-164, Ser-192, Ile-247, and Gln-292.

Belongs to the glycosyltransferase 28 family. MurG subfamily.

It localises to the cell inner membrane. The enzyme catalyses di-trans,octa-cis-undecaprenyl diphospho-N-acetyl-alpha-D-muramoyl-L-alanyl-D-glutamyl-meso-2,6-diaminopimeloyl-D-alanyl-D-alanine + UDP-N-acetyl-alpha-D-glucosamine = di-trans,octa-cis-undecaprenyl diphospho-[N-acetyl-alpha-D-glucosaminyl-(1-&gt;4)]-N-acetyl-alpha-D-muramoyl-L-alanyl-D-glutamyl-meso-2,6-diaminopimeloyl-D-alanyl-D-alanine + UDP + H(+). It functions in the pathway cell wall biogenesis; peptidoglycan biosynthesis. Its function is as follows. Cell wall formation. Catalyzes the transfer of a GlcNAc subunit on undecaprenyl-pyrophosphoryl-MurNAc-pentapeptide (lipid intermediate I) to form undecaprenyl-pyrophosphoryl-MurNAc-(pentapeptide)GlcNAc (lipid intermediate II). The sequence is that of UDP-N-acetylglucosamine--N-acetylmuramyl-(pentapeptide) pyrophosphoryl-undecaprenol N-acetylglucosamine transferase from Blochmanniella floridana.